Consider the following 114-residue polypeptide: Large ribosomal subunit protein P1 (114 aa).

Residues 55–114 form a disordered region; the sequence is EEAAAAPAAAPAASGSDDEAAADDGDDDEEADADEAAEAEDAGDDDDEEPSGEGLGDLFG. The segment covering 56-69 has biased composition (low complexity); sequence EAAAAPAAAPAASG. The span at 70 to 105 shows a compositional bias: acidic residues; sequence SDDEAAADDGDDDEEADADEAAEAEDAGDDDDEEPS.

The protein belongs to the eukaryotic ribosomal protein P1/P2 family. As to quaternary structure, part of the 50S ribosomal subunit. Homodimer, it forms part of the ribosomal stalk which helps the ribosome interact with GTP-bound translation factors. Forms a heptameric uL10/P0(P1)2(P1)2(P1)2 complex, where uL10/P0 forms an elongated spine to which the P1 dimers bind in a sequential fashion.

Forms part of the ribosomal stalk, playing a central role in the interaction of the ribosome with GTP-bound translation factors. This chain is Large ribosomal subunit protein P1, found in Halobacterium salinarum (strain ATCC 700922 / JCM 11081 / NRC-1) (Halobacterium halobium).